The primary structure comprises 585 residues: Aspartate--tRNA ligase (585 aa).

Glu173 serves as a coordination point for L-aspartate. The segment at 197-200 (QTLK) is aspartate. Arg219 provides a ligand contact to L-aspartate. ATP is bound by residues 219-221 (RDE) and Gln228. L-aspartate is bound at residue His446. Glu480 lines the ATP pocket. Arg487 is a binding site for L-aspartate. An ATP-binding site is contributed by 532–535 (GLDR).

This sequence belongs to the class-II aminoacyl-tRNA synthetase family. Type 1 subfamily. As to quaternary structure, homodimer.

The protein resides in the cytoplasm. The catalysed reaction is tRNA(Asp) + L-aspartate + ATP = L-aspartyl-tRNA(Asp) + AMP + diphosphate. Catalyzes the attachment of L-aspartate to tRNA(Asp) in a two-step reaction: L-aspartate is first activated by ATP to form Asp-AMP and then transferred to the acceptor end of tRNA(Asp). The polypeptide is Aspartate--tRNA ligase (Bacteroides fragilis (strain ATCC 25285 / DSM 2151 / CCUG 4856 / JCM 11019 / LMG 10263 / NCTC 9343 / Onslow / VPI 2553 / EN-2)).